Here is a 147-residue protein sequence, read N- to C-terminus: Large ribosomal subunit protein bL9 (147 aa).

This sequence belongs to the bacterial ribosomal protein bL9 family.

In terms of biological role, binds to the 23S rRNA. The polypeptide is Large ribosomal subunit protein bL9 (Nitratiruptor sp. (strain SB155-2)).